A 685-amino-acid polypeptide reads, in one-letter code: Galactocerebrosidase (685 aa).

The signal sequence occupies residues 1-42 (MAEWLLSASWQRRAKAMTAAAGSAGRAAVPLLLCALLAPGGA). T109 serves as a coordination point for substrate. N143 is a glycosylation site (N-linked (GlcNAc...) asparagine). 2 residues coordinate substrate: W151 and N197. E198 acts as the Proton donor/acceptor in catalysis. The active-site Nucleophile is the E274. Cysteines 287 and 394 form a disulfide. An N-linked (GlcNAc...) asparagine glycan is attached at N379. R396 lines the substrate pocket. N-linked (GlcNAc...) asparagine glycosylation is found at N403, N556, N559, and N602.

It belongs to the glycosyl hydrolase 59 family. In terms of tissue distribution, detected in urine. Detected in testis, brain and placenta (at protein level). Detected in kidney and liver.

The protein localises to the lysosome. It carries out the reaction a beta-D-galactosyl-(1&lt;-&gt;1')-N-acylsphing-4-enine + H2O = an N-acylsphing-4-enine + D-galactose. It catalyses the reaction beta-D-galactosyl-(1&lt;-&gt;1)-sphing-4-enine + H2O = sphing-4-enine + D-galactose. The enzyme catalyses a D-galactosylceramide + H2O = an N-acyl-sphingoid base + D-galactose. In terms of biological role, hydrolyzes the galactose ester bonds of glycolipids such as galactosylceramide and galactosylsphingosine. Enzyme with very low activity responsible for the lysosomal catabolism of galactosylceramide, a major lipid in myelin, kidney and epithelial cells of small intestine and colon. This chain is Galactocerebrosidase, found in Homo sapiens (Human).